Consider the following 456-residue polypeptide: NAD-dependent deacetylase sir2C (456 aa).

Residues 161 to 443 (IEIENNKIKE…LNLSKLLNWD (283 aa)) form the Deacetylase sirtuin-type domain. Catalysis depends on H294, which acts as the Proton acceptor. 4 residues coordinate Zn(2+): C302, C305, C331, and C336.

The protein belongs to the sirtuin family. Zn(2+) is required as a cofactor.

The catalysed reaction is N(6)-acetyl-L-lysyl-[protein] + NAD(+) + H2O = 2''-O-acetyl-ADP-D-ribose + nicotinamide + L-lysyl-[protein]. In terms of biological role, NAD-dependent deacetylase, which plays an important role in the regulation of transcriptional repression. The chain is NAD-dependent deacetylase sir2C (sir2C) from Dictyostelium discoideum (Social amoeba).